The primary structure comprises 208 residues: Small ribosomal subunit protein uS4 (208 aa).

In terms of domain architecture, S4 RNA-binding spans 98–159 (LRLDNVVFRL…RSKKVVRITE (62 aa)).

The protein belongs to the universal ribosomal protein uS4 family. As to quaternary structure, part of the 30S ribosomal subunit. Contacts protein S5. The interaction surface between S4 and S5 is involved in control of translational fidelity.

Its function is as follows. One of the primary rRNA binding proteins, it binds directly to 16S rRNA where it nucleates assembly of the body of the 30S subunit. With S5 and S12 plays an important role in translational accuracy. The sequence is that of Small ribosomal subunit protein uS4 from Anaeromyxobacter dehalogenans (strain 2CP-1 / ATCC BAA-258).